The sequence spans 737 residues: DNA mismatch repair protein MLH1 (737 aa).

Disordered stretches follow at residues 1 to 21 (MIDD…ATTI) and 378 to 416 (TLTS…PAGR). Residues 378–400 (TLTSQKSDSPVSQKPSGQKTQKV) show a composition bias toward polar residues.

Belongs to the DNA mismatch repair MutL/HexB family. In terms of assembly, heterodimer of MLH1 and PMS1, called MutLalpha, which is the major MMR MutL activity correcting base-base mismatches as well as IDLs. The heterodimer binds double strand DNA independently of a mismatch with positive cooperativity and has more than one DNA binding site. Heterodimer of MLH1 and MLH3, called MutLbeta, which is involved in correction of a specific subset of IDLs when associated with MutSbeta. As to expression, ubiquitous.

Its subcellular location is the nucleus. Involved in DNA mismatch repair (MMR), correcting insertion-deletion loops (IDLs) resulting from DNA replication, DNA damage or from recombination events between non-identical sequences during meiosis. Component of the MutLbeta heterodimer, which probably forms a ternary complex with the MutSbeta heterodimer that initially recognizes the DNA mismatches. This complex is thought to be responsible for directing the downstream MMR events, including strand discrimination, excision, and resynthesis. Plays a major role in promoting meiotic crossing-over and is involved in maintaining the genetic stability of simple sequence repeats by correction of frameshift intermediates. In Arabidopsis thaliana (Mouse-ear cress), this protein is DNA mismatch repair protein MLH1 (MLH1).